Consider the following 408-residue polypeptide: Neutral cholesterol ester hydrolase 1 (408 aa).

Over 1 to 4 (MRSS) the chain is Cytoplasmic. The chain crosses the membrane as a helical; Signal-anchor for type II membrane protein span at residues 5-25 (CVLLTALLALAAYYIYIPLPS). At 26 to 408 (SVSDPWKLML…SYIKWLDQNL (383 aa)) the chain is on the lumenal side. Positions 113–115 (HGG) match the Involved in the stabilization of the negatively charged intermediate by the formation of the oxyanion hole motif. Ser-191 is a catalytic residue. Residues Asn-270 and Asn-287 are each glycosylated (N-linked (GlcNAc...) asparagine). Residues Asp-348 and His-378 contribute to the active site. A glycan (N-linked (GlcNAc...) asparagine) is linked at Asn-389.

It belongs to the 'GDXG' lipolytic enzyme family. N-glycosylated.

The protein resides in the cell membrane. The protein localises to the microsome. It carries out the reaction a 1-O-alkyl-2-acetyl-sn-glycerol + H2O = a 1-O-alkyl-sn-glycerol + acetate + H(+). The catalysed reaction is 1-O-hexadecyl-2-acetyl-sn-glycerol + H2O = 1-O-hexadecyl-sn-glycerol + acetate + H(+). The enzyme catalyses a cholesterol ester + H2O = cholesterol + a fatty acid + H(+). It catalyses the reaction cholesteryl (9Z-octadecenoate) + H2O = cholesterol + (9Z)-octadecenoate + H(+). Functionally, hydrolyzes 2-acetyl monoalkylglycerol ether (1-O-alkyl-2-acetyl-sn-glycerol), the penultimate precursor of the pathway for de novo synthesis of platelet-activating factor. May be responsible for the hydrolysis of cholesterol esters (such as cholesteryl (9Z-octadecenoate)) in macrophages. Also involved in organ detoxification by hydrolyzing exogenous organophosphorus compounds. This chain is Neutral cholesterol ester hydrolase 1 (NCEH1), found in Bos taurus (Bovine).